The following is a 541-amino-acid chain: Chaperonin GroEL 2 (541 aa).

ATP-binding positions include T29–P32, D86–T90, G413, N476–A478, and D492.

Belongs to the chaperonin (HSP60) family. Forms a cylinder of 14 subunits composed of two heptameric rings stacked back-to-back. Interacts with the co-chaperonin GroES.

Its subcellular location is the cytoplasm. The enzyme catalyses ATP + H2O + a folded polypeptide = ADP + phosphate + an unfolded polypeptide.. Functionally, together with its co-chaperonin GroES, plays an essential role in assisting protein folding. The GroEL-GroES system forms a nano-cage that allows encapsulation of the non-native substrate proteins and provides a physical environment optimized to promote and accelerate protein folding. The polypeptide is Chaperonin GroEL 2 (Streptomyces avermitilis (strain ATCC 31267 / DSM 46492 / JCM 5070 / NBRC 14893 / NCIMB 12804 / NRRL 8165 / MA-4680)).